A 541-amino-acid chain; its full sequence is Zingiberene synthase (541 aa).

Residues aspartate 295, aspartate 299, asparagine 439, serine 443, and glutamate 447 each contribute to the Mg(2+) site. The short motif at aspartate 295–aspartate 299 is the DDXXD motif element.

This sequence belongs to the terpene synthase family. Requires Mg(2+) as cofactor. Mn(2+) is required as a cofactor.

It is found in the cytoplasm. The catalysed reaction is (2E,6E)-farnesyl diphosphate = alpha-zingiberene + diphosphate. It participates in secondary metabolite biosynthesis; terpenoid biosynthesis. Functionally, sesquiterpene synthase converting farnesyl diphosphate into two major products, zingiberene &gt; beta-sesquiphellandrene, and five minor products, 7-epi-sesquithujene, sesquisabinene A, (E)-alpha-bergamotene, (E)-beta-farnesene and beta-bisabolene. Can also accept geranyl diphosphate as substrate, producing nine monoterpenes, with myrcene, limonene and alpha-terpinolene as the major products. The sequence is that of Zingiberene synthase (TPS1) from Sorghum bicolor (Sorghum).